Consider the following 154-residue polypeptide: MGLSDGEWQLVLNVWGKVEADIPGHGQEVLIRLFKGHPETLEKFDKFKHLKSEDEMKASEDLKKHGATVLTALGGILKKKGHHEAEIKPLAQSHATKHKIPVKYLEFISECIIQVLHSKHPGDFGADAQGAMNKALELFRKDMASNYKELGFQG.

One can recognise a Globin domain in the interval 2–148; sequence GLSDGEWQLV…FRKDMASNYK (147 aa). Ser4 is modified (phosphoserine). His65 is a binding site for nitrite. His65 serves as a coordination point for O2. Phosphothreonine is present on Thr68. Residue His94 participates in heme b binding.

This sequence belongs to the globin family. Monomeric.

The protein localises to the cytoplasm. The protein resides in the sarcoplasm. The enzyme catalyses Fe(III)-heme b-[protein] + nitric oxide + H2O = Fe(II)-heme b-[protein] + nitrite + 2 H(+). The catalysed reaction is H2O2 + AH2 = A + 2 H2O. In terms of biological role, monomeric heme protein which primary function is to store oxygen and facilitate its diffusion within muscle tissues. Reversibly binds oxygen through a pentacoordinated heme iron and enables its timely and efficient release as needed during periods of heightened demand. Depending on the oxidative conditions of tissues and cells, and in addition to its ability to bind oxygen, it also has a nitrite reductase activity whereby it regulates the production of bioactive nitric oxide. Under stress conditions, like hypoxia and anoxia, it also protects cells against reactive oxygen species thanks to its pseudoperoxidase activity. This is Myoglobin (MB) from Pan troglodytes (Chimpanzee).